Reading from the N-terminus, the 636-residue chain is 1-deoxy-D-xylulose-5-phosphate synthase (636 aa).

Thiamine diphosphate-binding positions include His-77 and 118–120 (GHS). Asp-149 contacts Mg(2+). Thiamine diphosphate contacts are provided by residues 150–151 (GA), Asn-178, Tyr-290, and Glu-375. Asn-178 lines the Mg(2+) pocket.

This sequence belongs to the transketolase family. DXPS subfamily. In terms of assembly, homodimer. The cofactor is Mg(2+). It depends on thiamine diphosphate as a cofactor.

It catalyses the reaction D-glyceraldehyde 3-phosphate + pyruvate + H(+) = 1-deoxy-D-xylulose 5-phosphate + CO2. It functions in the pathway metabolic intermediate biosynthesis; 1-deoxy-D-xylulose 5-phosphate biosynthesis; 1-deoxy-D-xylulose 5-phosphate from D-glyceraldehyde 3-phosphate and pyruvate: step 1/1. Its function is as follows. Catalyzes the acyloin condensation reaction between C atoms 2 and 3 of pyruvate and glyceraldehyde 3-phosphate to yield 1-deoxy-D-xylulose-5-phosphate (DXP). The protein is 1-deoxy-D-xylulose-5-phosphate synthase of Cytophaga hutchinsonii (strain ATCC 33406 / DSM 1761 / CIP 103989 / NBRC 15051 / NCIMB 9469 / D465).